Here is a 413-residue protein sequence, read N- to C-terminus: Lysosomal phospholipase A and acyltransferase (413 aa).

A signal peptide spans 1-33 (MDRHLCICREIQLRSGLLFPFLLLMMLADLALP). D46 is a substrate binding site. An intrachain disulfide couples C65 to C89. N99 carries N-linked (GlcNAc...) asparagine glycosylation. S198 (acyl-ester intermediate) is an active-site residue. S198 is a binding site for Zn(2+). M199 provides a ligand contact to substrate. Residues N273 and N289 are each glycosylated (N-linked (GlcNAc...) asparagine). Zn(2+) is bound at residue C355. Active-site charge relay system residues include D360 and H392. Residue H392 coordinates Zn(2+). Residue N398 is glycosylated (N-linked (GlcNAc...) asparagine).

The protein belongs to the AB hydrolase superfamily. Lipase family. Post-translationally, N-glycosylated. N-glycosylation is important for maturation of the enzyme and normal subcellular location. As to expression, detected in alveolar macrophages (at protein level). Widely expressed. Expressed at highest levels in alveolar macrophages.

Its subcellular location is the lysosome. The protein localises to the secreted. It localises to the membrane. It carries out the reaction a 1,2-diacyl-sn-glycero-3-phosphocholine + H2O = a 2-acyl-sn-glycero-3-phosphocholine + a fatty acid + H(+). It catalyses the reaction 1,2-dihexadecanoyl-sn-glycero-3-phosphocholine + H2O = 2-hexadecanoyl-sn-glycero-3-phosphocholine + hexadecanoate + H(+). The catalysed reaction is 1-hexadecanoyl-2-(9Z-octadecenoyl)-sn-glycero-3-phosphocholine + H2O = 2-(9Z-octadecenoyl)-sn-glycero-3-phosphocholine + hexadecanoate + H(+). The enzyme catalyses 1,2-di-(9Z-octadecenoyl)-sn-glycero-3-phosphocholine + H2O = 2-(9Z-octadecenoyl)-sn-glycero-3-phosphocholine + (9Z)-octadecenoate + H(+). It carries out the reaction 1-hexadecanoyl-2-glutaroyl-sn-glycero-3-phosphocholine + H2O = 2-glutaroyl-sn-glycero-3-phosphocholine + hexadecanoate + H(+). It catalyses the reaction 1-hexadecanoyl-2-nonadioyl-sn-glycero-3-phosphocholine + H2O = 2-nonadioyl-sn-glycero-3-phosphocholine + hexadecanoate + H(+). The catalysed reaction is 1-hexadecanoyl-2-(5-oxopentanoyl)-sn-glycero-3-phosphocholine + H2O = 2-(5-oxopentanoyl)-sn-glycero-3-phosphocholine + hexadecanoate + H(+). The enzyme catalyses 1-hexadecanoyl-2-(9-oxononanoyl)-sn-glycero-3-phosphocholine + H2O = 2-(9-oxononanoyl)-sn-glycero-3-phosphocholine + hexadecanoate + H(+). It carries out the reaction a 1,2-diacyl-sn-glycero-3-phosphocholine + H2O = a 1-acyl-sn-glycero-3-phosphocholine + a fatty acid + H(+). It catalyses the reaction 1,2-dihexadecanoyl-sn-glycero-3-phosphocholine + H2O = 1-hexadecanoyl-sn-glycero-3-phosphocholine + hexadecanoate + H(+). The catalysed reaction is 1-hexadecanoyl-2-(9Z-octadecenoyl)-sn-glycero-3-phosphocholine + H2O = 1-hexadecanoyl-sn-glycero-3-phosphocholine + (9Z)-octadecenoate + H(+). The enzyme catalyses 1,2-di-(9Z-octadecenoyl)-sn-glycero-3-phosphocholine + H2O = 1-(9Z-octadecenoyl)-sn-glycero-3-phosphocholine + (9Z)-octadecenoate + H(+). It carries out the reaction a 1-acyl-sn-glycero-3-phosphocholine + H2O = sn-glycerol 3-phosphocholine + a fatty acid + H(+). It catalyses the reaction 1-hexadecanoyl-sn-glycero-3-phosphocholine + H2O = sn-glycerol 3-phosphocholine + hexadecanoate + H(+). The catalysed reaction is N-(acetyl)-sphing-4-enine + a 1,2-diacyl-sn-glycero-3-phosphoethanolamine = 1-O-acyl-N-(acetyl)-sphing-4-enine + a 2-acyl-sn-glycero-3-phosphoethanolamine. The enzyme catalyses 1-hexadecanoyl-2-(9Z-octadecenoyl)-sn-glycero-3-phosphoethanolamine + N-(acetyl)-sphing-4-enine = 2-(9Z-octadecenoyl)-sn-glycero-3-phosphoethanolamine + 1-hexadecanoyl-N-(acetyl)-sphing-4-enine. It carries out the reaction 1-hexadecanoyl-2-(9Z,12Z-octadecadienoyl)-sn-glycero-3-phosphoethanolamine + N-(acetyl)-sphing-4-enine = 2-(9Z,12Z)-octadecadienoyl-sn-glycero-3-phosphoethanolamine + 1-hexadecanoyl-N-(acetyl)-sphing-4-enine. It catalyses the reaction 1-hexadecanoyl-2-(5Z,8Z,11Z,14Z-eicosatetraenoyl)-sn-glycero-3-phosphoethanolamine + N-(acetyl)-sphing-4-enine = 2-(5Z,8Z,11Z,14Z)-eicosatetraenoyl-sn-glycero-3-phosphoethanolamine + 1-hexadecanoyl-N-(acetyl)-sphing-4-enine. The catalysed reaction is N-(acetyl)-sphing-4-enine + a 1,2-diacyl-sn-glycero-3-phosphoethanolamine = 1-O-acyl-N-(acetyl)-sphing-4-enine + a 1-acyl-sn-glycero-3-phosphoethanolamine. The enzyme catalyses 1-hexadecanoyl-2-(9Z-octadecenoyl)-sn-glycero-3-phosphoethanolamine + N-(acetyl)-sphing-4-enine = 1-(9Z-octadecenoyl)-N-(acetyl)-sphing-4-enine + 1-hexadecanoyl-sn-glycero-3-phosphoethanolamine. It carries out the reaction 1-hexadecanoyl-2-(9Z,12Z-octadecadienoyl)-sn-glycero-3-phosphoethanolamine + N-(acetyl)-sphing-4-enine = 1-(9Z,12Z-octadecadienoyl)-N-acetylsphing-4-enine + 1-hexadecanoyl-sn-glycero-3-phosphoethanolamine. It catalyses the reaction 1-hexadecanoyl-2-(5Z,8Z,11Z,14Z-eicosatetraenoyl)-sn-glycero-3-phosphoethanolamine + N-(acetyl)-sphing-4-enine = 1-(5Z,8Z,11Z,14Z)-eicosatetraenoyl-N-(acetyl)-sphing-4-enine + 1-hexadecanoyl-sn-glycero-3-phosphoethanolamine. The catalysed reaction is N-(acetyl)-sphing-4-enine + a 1,2-diacyl-sn-glycero-3-phosphocholine = 1-O-acyl-N-(acetyl)-sphing-4-enine + a 2-acyl-sn-glycero-3-phosphocholine. The enzyme catalyses 1-hexadecanoyl-2-(9Z-octadecenoyl)-sn-glycero-3-phosphocholine + N-(acetyl)-sphing-4-enine = 1-hexadecanoyl-N-(acetyl)-sphing-4-enine + 2-(9Z-octadecenoyl)-sn-glycero-3-phosphocholine. It carries out the reaction 1-hexadecanoyl-2-(9Z,12Z-octadecadienoyl)-sn-glycero-3-phosphocholine + N-(acetyl)-sphing-4-enine = 2-(9Z,12Z-octadecadienoyl)-sn-glycero-3-phosphocholine + 1-hexadecanoyl-N-(acetyl)-sphing-4-enine. It catalyses the reaction 1-hexadecanoyl-2-(5Z,8Z,11Z,14Z-eicosatetraenoyl)-sn-glycero-3-phosphocholine + N-(acetyl)-sphing-4-enine = 1-hexadecanoyl-N-(acetyl)-sphing-4-enine + 2-(5Z,8Z,11Z,14Z)-eicosatetraenoyl-sn-glycero-3-phosphocholine. The catalysed reaction is 1-hexadecanoyl-2-(4Z,7Z,10Z,13Z,16Z,19Z-docosahexaenoyl)-sn-glycero-3-phosphocholine + N-(acetyl)-sphing-4-enine = 2-(4Z,7Z,10Z,13Z,16Z,19Z-docosahexaenoyl)-sn-glycero-3-phosphocholine + 1-hexadecanoyl-N-(acetyl)-sphing-4-enine. The enzyme catalyses 1-hexadecanoyl-2-nonadioyl-sn-glycero-3-phosphocholine + N-(acetyl)-sphing-4-enine = 2-nonadioyl-sn-glycero-3-phosphocholine + 1-hexadecanoyl-N-(acetyl)-sphing-4-enine. It carries out the reaction 1-octadecanoyl-2-(9Z-octadecenoyl)-sn-glycero-3-phosphocholine + N-(acetyl)-sphing-4-enine = 1-octadecanoyl-N-(acetyl)-sphing-4-enine + 2-(9Z-octadecenoyl)-sn-glycero-3-phosphocholine. It catalyses the reaction 1-(9Z)-octadecenoyl-2-octadecanoyl-sn-glycero-3-phosphocholine + N-(acetyl)-sphing-4-enine = 2-octadecanoyl-sn-glycero-3-phosphocholine + 1-(9Z-octadecenoyl)-N-(acetyl)-sphing-4-enine. The catalysed reaction is 1-octadecanoyl-2-(5Z,8Z,11Z,14Z-eicosatetraenoyl)-sn-glycero-3-phosphocholine + N-(acetyl)-sphing-4-enine = 1-octadecanoyl-N-(acetyl)-sphing-4-enine + 2-(5Z,8Z,11Z,14Z)-eicosatetraenoyl-sn-glycero-3-phosphocholine. The enzyme catalyses 1-(9Z-octadecenoyl)-2-hexadecanoyl-sn-glycero-3-phosphocholine + N-(acetyl)-sphing-4-enine = 1-(9Z-octadecenoyl)-N-(acetyl)-sphing-4-enine + 2-hexadecanoyl-sn-glycero-3-phosphocholine. It carries out the reaction N-(acetyl)-sphing-4-enine + a 1,2-diacyl-sn-glycero-3-phosphocholine = 1-O-acyl-N-(acetyl)-sphing-4-enine + a 1-acyl-sn-glycero-3-phosphocholine. It catalyses the reaction 1-hexadecanoyl-2-(9Z-octadecenoyl)-sn-glycero-3-phosphocholine + N-(acetyl)-sphing-4-enine = 1-(9Z-octadecenoyl)-N-(acetyl)-sphing-4-enine + 1-hexadecanoyl-sn-glycero-3-phosphocholine. The catalysed reaction is 1-hexadecanoyl-2-(9Z,12Z-octadecadienoyl)-sn-glycero-3-phosphocholine + N-(acetyl)-sphing-4-enine = 1-(9Z,12Z-octadecadienoyl)-N-acetylsphing-4-enine + 1-hexadecanoyl-sn-glycero-3-phosphocholine. The enzyme catalyses 1-hexadecanoyl-2-(5Z,8Z,11Z,14Z-eicosatetraenoyl)-sn-glycero-3-phosphocholine + N-(acetyl)-sphing-4-enine = 1-(5Z,8Z,11Z,14Z)-eicosatetraenoyl-N-(acetyl)-sphing-4-enine + 1-hexadecanoyl-sn-glycero-3-phosphocholine. It carries out the reaction 1-hexadecanoyl-2-(4Z,7Z,10Z,13Z,16Z,19Z-docosahexaenoyl)-sn-glycero-3-phosphocholine + N-(acetyl)-sphing-4-enine = 1-(4Z,7Z,10Z,13Z,16Z,19Z-docosahexaenoyl)-N-(acetyl)-sphing-4-enine + 1-hexadecanoyl-sn-glycero-3-phosphocholine. It catalyses the reaction 1-octadecanoyl-2-(9Z-octadecenoyl)-sn-glycero-3-phosphocholine + N-(acetyl)-sphing-4-enine = 1-(9Z-octadecenoyl)-N-(acetyl)-sphing-4-enine + 1-octadecanoyl-sn-glycero-3-phosphocholine. The catalysed reaction is 1-octadecanoyl-2-(9Z,12Z)-octadecadienoyl-sn-glycero-3-phosphocholine + N-(acetyl)-sphing-4-enine = 1-(9Z,12Z-octadecadienoyl)-N-acetylsphing-4-enine + 1-octadecanoyl-sn-glycero-3-phosphocholine. The enzyme catalyses 1-(9Z-octadecenoyl)-2-hexadecanoyl-sn-glycero-3-phosphocholine + N-(acetyl)-sphing-4-enine = 1-hexadecanoyl-N-(acetyl)-sphing-4-enine + 1-(9Z-octadecenoyl)-sn-glycero-3-phosphocholine. It carries out the reaction 1-(9Z)-octadecenoyl-2-octadecanoyl-sn-glycero-3-phosphocholine + N-(acetyl)-sphing-4-enine = 1-octadecanoyl-N-(acetyl)-sphing-4-enine + 1-(9Z-octadecenoyl)-sn-glycero-3-phosphocholine. It catalyses the reaction 1,2-di-(9Z-octadecenoyl)-sn-glycero-3-phosphocholine + N-(acetyl)-sphing-4-enine = 1-(9Z-octadecenoyl)-N-(acetyl)-sphing-4-enine + 1-(9Z-octadecenoyl)-sn-glycero-3-phosphocholine. The catalysed reaction is 1-octadecanoyl-2-(5Z,8Z,11Z,14Z-eicosatetraenoyl)-sn-glycero-3-phosphocholine + N-(acetyl)-sphing-4-enine = 1-(5Z,8Z,11Z,14Z)-eicosatetraenoyl-N-(acetyl)-sphing-4-enine + 1-octadecanoyl-sn-glycero-3-phosphocholine. The enzyme catalyses a 1,2-diacyl-sn-glycero-3-phospho-L-serine + N-(acetyl)-sphing-4-enine = a 2-acyl-sn-glycero-3-phospho-L-serine + 1-O-acyl-N-(acetyl)-sphing-4-enine. It carries out the reaction 1-octadecanoyl-2-(9Z-octadecenoyl)-sn-glycero-3-phospho-L-serine + N-(acetyl)-sphing-4-enine = 2-(9Z-octadecenoyl)-sn-glycero-3-phospho-L-serine + 1-octadecanoyl-N-(acetyl)-sphing-4-enine. It catalyses the reaction a 1,2-diacyl-sn-glycero-3-phospho-L-serine + N-(acetyl)-sphing-4-enine = 1-O-acyl-N-(acetyl)-sphing-4-enine + a 1-acyl-sn-glycero-3-phospho-L-serine. The catalysed reaction is 1-octadecanoyl-2-(9Z-octadecenoyl)-sn-glycero-3-phospho-L-serine + N-(acetyl)-sphing-4-enine = 1-octadecanoyl-sn-glycero-3-phosphoserine + 1-(9Z-octadecenoyl)-N-(acetyl)-sphing-4-enine. The enzyme catalyses a 1,2-diacyl-sn-glycero-3-phospho-(1'-sn-glycerol) + N-(acetyl)-sphing-4-enine = 2-acyl-sn-glycero-3-phospho-(1'-sn-glycerol) + 1-O-acyl-N-(acetyl)-sphing-4-enine. It carries out the reaction 1-octadecanoyl-2-(9Z-octadecenoyl)-sn-glycero-3-phospho-(1'-sn-glycerol) + N-(acetyl)-sphing-4-enine = 2-(9Z-octadecenoyl)-sn-glycero-3-phospho-(1'-sn-glycerol) + 1-octadecanoyl-N-(acetyl)-sphing-4-enine. It catalyses the reaction a 1,2-diacyl-sn-glycero-3-phospho-(1'-sn-glycerol) + N-(acetyl)-sphing-4-enine = 1-O-acyl-N-(acetyl)-sphing-4-enine + 1-acyl-sn-glycero-3-phospho-(1'-sn-glycerol). The catalysed reaction is 1-octadecanoyl-2-(9Z-octadecenoyl)-sn-glycero-3-phospho-(1'-sn-glycerol) + N-(acetyl)-sphing-4-enine = 1-octadecanoyl-sn-glycero-3-phospho-(1'-sn-glycerol) + 1-(9Z-octadecenoyl)-N-(acetyl)-sphing-4-enine. The enzyme catalyses an N-acylethanolamine + a 1,2-diacyl-sn-glycero-3-phosphocholine = 2-(acylamino)ethyl fatty acid + a 2-acyl-sn-glycero-3-phosphocholine. It carries out the reaction an N-acylethanolamine + a 1,2-diacyl-sn-glycero-3-phosphocholine = 2-(acylamino)ethyl fatty acid + a 1-acyl-sn-glycero-3-phosphocholine. It catalyses the reaction N-(5Z,8Z,11Z,14Z-eicosatetraenoyl)-ethanolamine + 1,2-di-(9Z-octadecenoyl)-sn-glycero-3-phosphocholine = 2-[(5Z,8Z,11Z,14Z)-eicosatetraenoylamino]ethyl (9Z)-octadecenoate + (9Z-octadecenoyl)-sn-glycero-3-phosphocholine. The catalysed reaction is N-(9Z-octadecenoyl) ethanolamine + 1,2-di-(9Z-octadecenoyl)-sn-glycero-3-phosphocholine = 2-[(9Z)-octadecenoylamino]ethyl (9Z)-octadecenoate + (9Z-octadecenoyl)-sn-glycero-3-phosphocholine. The enzyme catalyses a 3-acyl-sn-glycerol + a 1,2-diacyl-sn-glycero-3-phosphocholine = a 1,3-diacylglycerol + a 1-acyl-sn-glycero-3-phosphocholine. It carries out the reaction a 3-acyl-sn-glycerol + a 1,2-diacyl-sn-glycero-3-phosphocholine = a 1,3-diacylglycerol + a 2-acyl-sn-glycero-3-phosphocholine. It catalyses the reaction 3-(9Z-octadecenoyl)-sn-glycerol + 1,2-di-(9Z-octadecenoyl)-sn-glycero-3-phosphocholine = 1,3-di-(9Z-octadecenoyl)-glycerol + (9Z-octadecenoyl)-sn-glycero-3-phosphocholine. The catalysed reaction is 3-hexadecanoyl-sn-glycerol + 1,2-di-(9Z-octadecenoyl)-sn-glycero-3-phosphocholine = 1-(9Z)-octadecenoyl-3-hexadecanoyl-sn-glycerol + (9Z-octadecenoyl)-sn-glycero-3-phosphocholine. The enzyme catalyses a 1-acyl-sn-glycerol + a 1,2-diacyl-sn-glycero-3-phosphocholine = a 1,3-diacylglycerol + a 2-acyl-sn-glycero-3-phosphocholine. It carries out the reaction a 1-acyl-sn-glycerol + a 1,2-diacyl-sn-glycero-3-phosphocholine = a 1,3-diacylglycerol + a 1-acyl-sn-glycero-3-phosphocholine. It catalyses the reaction 1-(9Z-octadecenoyl)-sn-glycerol + 1,2-di-(9Z-octadecenoyl)-sn-glycero-3-phosphocholine = 1,3-di-(9Z-octadecenoyl)-glycerol + (9Z-octadecenoyl)-sn-glycero-3-phosphocholine. The catalysed reaction is 1-hexadecanoyl-sn-glycerol + 1,2-di-(9Z-octadecenoyl)-sn-glycero-3-phosphocholine = 1-hexadecanoyl-3-(9Z)-octadecenoyl-sn-glycerol + (9Z-octadecenoyl)-sn-glycero-3-phosphocholine. The enzyme catalyses a 2-acylglycerol + a 1,2-diacyl-sn-glycero-3-phosphocholine = a 1,2-diacylglycerol + a 2-acyl-sn-glycero-3-phosphocholine. It carries out the reaction a 2-acylglycerol + a 1,2-diacyl-sn-glycero-3-phosphocholine = a 1,2-diacylglycerol + a 1-acyl-sn-glycero-3-phosphocholine. It catalyses the reaction 2-hexadecanoylglycerol + 1,2-di-(9Z-octadecenoyl)-sn-glycero-3-phosphocholine = 1-(9Z)-octadecenoyl-2-hexadecanoylglycerol + (9Z-octadecenoyl)-sn-glycero-3-phosphocholine. The catalysed reaction is 1-O-alkylglycerol + a 1,2-diacyl-sn-glycero-3-phosphocholine = 1-O-alkyl-3-acylglycerol + a 1-acyl-sn-glycero-3-phosphocholine. The enzyme catalyses 1-O-alkylglycerol + a 1,2-diacyl-sn-glycero-3-phosphocholine = 1-O-alkyl-3-acylglycerol + a 2-acyl-sn-glycero-3-phosphocholine. It carries out the reaction 1-O-hexadecylglycerol + 1,2-di-(9Z-octadecenoyl)-sn-glycero-3-phosphocholine = 1-O-hexadecyl-3-(9Z)-octadecenoylglycerol + (9Z-octadecenoyl)-sn-glycero-3-phosphocholine. It catalyses the reaction 1-O-alkyl-2-acyl-sn-glycerol + a 1,2-diacyl-sn-glycero-3-phosphocholine = 1-O-alkyl-2,3-diacyl-sn-glycerol + a 2-acyl-sn-glycero-3-phosphocholine. The catalysed reaction is 1-O-alkyl-2-acyl-sn-glycerol + a 1,2-diacyl-sn-glycero-3-phosphocholine = 1-O-alkyl-2,3-diacyl-sn-glycerol + a 1-acyl-sn-glycero-3-phosphocholine. The enzyme catalyses 1-O-hexadecyl-2-acetyl-sn-glycerol + 1,2-di-(9Z-octadecenoyl)-sn-glycero-3-phosphocholine = 1-O-hexadecyl-2-acetyl-3-(9Z)-octadecenoyl-sn-glycerol + (9Z-octadecenoyl)-sn-glycero-3-phosphocholine. It carries out the reaction 1-O-hexadecyl-2-O-methyl-sn-glycerol + 1,2-di-(9Z-octadecenoyl)-sn-glycero-3-phosphocholine = 1-O-hexadecyl-2-O-methyl-3-(9Z)-octadecenoyl-sn-glycerol + (9Z-octadecenoyl)-sn-glycero-3-phosphocholine. It catalyses the reaction a 1,2-diacyl-sn-glycero-3-phosphoethanolamine + H2O = a 1-acyl-sn-glycero-3-phosphoethanolamine + a fatty acid + H(+). The catalysed reaction is 1-acyl-2-(5Z,8Z,11Z,14Z)-eicosatetraenoyl-sn-glycero-3-phosphoethanolamine + H2O = a 1-acyl-sn-glycero-3-phosphoethanolamine + (5Z,8Z,11Z,14Z)-eicosatetraenoate + H(+). The enzyme catalyses a 1,2-diacyl-sn-glycero-3-phospho-(1'-sn-glycerol) + H2O = 1-acyl-sn-glycero-3-phospho-(1'-sn-glycerol) + a fatty acid + H(+). It carries out the reaction 1-hexadecanoyl-2-(9Z-octadecenoyl)-sn-glycero-3-phospho-(1'-sn-glycerol) + H2O = 1-hexadecanoyl-sn-glycero-3-phospho-(1'-sn-glycerol) + (9Z)-octadecenoate + H(+). It catalyses the reaction a 1,2-diacyl-sn-glycero-3-phospho-(1'-sn-glycerol) + H2O = 2-acyl-sn-glycero-3-phospho-(1'-sn-glycerol) + a fatty acid + H(+). The catalysed reaction is 1-hexadecanoyl-2-(9Z-octadecenoyl)-sn-glycero-3-phospho-(1'-sn-glycerol) + H2O = 2-(9Z-octadecenoyl)-sn-glycero-3-phospho-(1'-sn-glycerol) + hexadecanoate + H(+). With respect to regulation, transacylase activity is inhibited by MJ33. Its function is as follows. Has dual calcium-independent phospholipase and O-acyltransferase activities with a potential role in glycerophospholipid homeostasis and remodeling of acyl groups of lipophilic alcohols present in acidic cellular compartments. Catalyzes hydrolysis of the ester bond of the fatty acyl group attached at sn-1 or sn-2 position of phospholipids (phospholipase A1 or A2 activity) and transfer it to the hydroxyl group at the first carbon of lipophilic alcohols (O-acyltransferase activity). Among preferred fatty acyl donors are phosphatidylcholines, phosphatidylethanolamines, phosphatidylglycerols and phosphatidylserines. Favors sn-2 over sn-1 deacylation of unsaturated fatty acyl groups of phosphatidylcholines, phosphatidylethanolamines, and phosphatidylglycerols. Among preferred fatty acyl acceptors are natural lipophilic alcohols including short-chain ceramide N-acetyl-sphingosine (C2 ceramide), alkylacylglycerols, monoacylglycerols, and acylethanolamides such as anandamide and oleoylethanolamide. Selectively hydrolyzes the sn-1 fatty acyl group of truncated oxidized phospholipids and may play a role in detoxification of reactive oxidized phospholipids during oxidative stress. Required for normal phospholipid degradation in alveolar macrophages with potential implications in the clearance of pulmonary surfactant, which is mainly composed of dipalmitoylphosphatidylcholine (1,2-dihexadecanoyl-sn-glycero-3-phosphocholine). Involved in the first step of bis(monoacylglycero)phosphate (BMP) de novo synthesis from phosphatidylglycerol (1,2-diacyl-sn-glycero-3-phospho-(1'-sn-glycerol), PG). BMP is an important player in cargo sorting and degradation, regulation of cellular cholesterol levels and intercellular communication. At neutral pH, hydrolyzes the sn-1 fatty acyl group of the lysophosphatidylcholines. The polypeptide is Lysosomal phospholipase A and acyltransferase (Pla2g15) (Rattus norvegicus (Rat)).